Here is a 461-residue protein sequence, read N- to C-terminus: Argininosuccinate lyase (461 aa).

It belongs to the lyase 1 family. Argininosuccinate lyase subfamily.

It localises to the cytoplasm. It catalyses the reaction 2-(N(omega)-L-arginino)succinate = fumarate + L-arginine. Its pathway is amino-acid biosynthesis; L-arginine biosynthesis; L-arginine from L-ornithine and carbamoyl phosphate: step 3/3. The sequence is that of Argininosuccinate lyase from Clostridium beijerinckii (strain ATCC 51743 / NCIMB 8052) (Clostridium acetobutylicum).